Consider the following 480-residue polypeptide: Transposase for transposon Tn552 (480 aa).

The segment at residues 36-55 (LSSISKSKGIALSTLYRWNK) is a DNA-binding region (H-T-H motif). Residues 155-341 (ESSRPNEIWQ…TPINRWNSNH (187 aa)) enclose the Integrase catalytic domain. Positions 438–480 (RKHLKQNIASPSTTDLIKEEKSYGYSPQETTKNVKKLKRYRND) are disordered. The segment covering 470 to 480 (NVKKLKRYRND) has biased composition (basic residues).

This Staphylococcus aureus protein is Transposase for transposon Tn552.